We begin with the raw amino-acid sequence, 157 residues long: Transcriptional repressor NrdR (157 aa).

The segment at 3 to 34 (CPFCGHAESQVKDSRPSEDGAAIRRRRMCPEC) is a zinc-finger region. An ATP-cone domain is found at 49–139 (LIIVKRSGRR…VYRDFKETSD (91 aa)).

The protein belongs to the NrdR family. Requires Zn(2+) as cofactor.

Functionally, negatively regulates transcription of bacterial ribonucleotide reductase nrd genes and operons by binding to NrdR-boxes. The polypeptide is Transcriptional repressor NrdR (Caulobacter vibrioides (strain ATCC 19089 / CIP 103742 / CB 15) (Caulobacter crescentus)).